The chain runs to 593 residues: Aspartate--tRNA ligase (593 aa).

Residue Glu180 participates in L-aspartate binding. Residues 204–207 (QLFK) are aspartate. Arg226 contributes to the L-aspartate binding site. ATP contacts are provided by residues 226–228 (RDE) and Gln235. Residue His454 coordinates L-aspartate. An ATP-binding site is contributed by Glu488. Arg495 lines the L-aspartate pocket. 540-543 (GFDR) contributes to the ATP binding site.

The protein belongs to the class-II aminoacyl-tRNA synthetase family. Type 1 subfamily. As to quaternary structure, homodimer.

The protein resides in the cytoplasm. The catalysed reaction is tRNA(Asp) + L-aspartate + ATP = L-aspartyl-tRNA(Asp) + AMP + diphosphate. In terms of biological role, catalyzes the attachment of L-aspartate to tRNA(Asp) in a two-step reaction: L-aspartate is first activated by ATP to form Asp-AMP and then transferred to the acceptor end of tRNA(Asp). The sequence is that of Aspartate--tRNA ligase from Clostridium novyi (strain NT).